The primary structure comprises 73 residues: Tetrahydromethanopterin S-methyltransferase subunit F (73 aa).

Residues 52–72 traverse the membrane as a helical segment; it reads IGFAAGFLFSLLMVIVLPLLF.

It belongs to the MtrF family. The complex is composed of 8 subunits; MtrA, MtrB, MtrC, MtrD, MtrE, MtrF, MtrG and MtrH.

It localises to the cell membrane. The catalysed reaction is 5-methyl-5,6,7,8-tetrahydromethanopterin + coenzyme M + 2 Na(+)(in) = 5,6,7,8-tetrahydromethanopterin + methyl-coenzyme M + 2 Na(+)(out). It participates in one-carbon metabolism; methanogenesis from CO(2); methyl-coenzyme M from 5,10-methylene-5,6,7,8-tetrahydromethanopterin: step 2/2. In terms of biological role, part of a complex that catalyzes the formation of methyl-coenzyme M and tetrahydromethanopterin from coenzyme M and methyl-tetrahydromethanopterin. This is an energy-conserving, sodium-ion translocating step. The polypeptide is Tetrahydromethanopterin S-methyltransferase subunit F (Methanosarcina barkeri (strain Fusaro / DSM 804)).